The sequence spans 730 residues: UvrABC system protein C (730 aa).

Positions 16 to 95 constitute a GIY-YIG domain; sequence AAPGVYKFRD…IKEFDPRFNV (80 aa). Residues 208-243 form the UVR domain; that stretch reads DKLVKDLEKRMQQASEDLDFETAARLRDDIGALRKA. The interval 678-730 is disordered; the sequence is ARALPAAVGDDELDKESESSVTSADAPSAESGSGDEGSESRELSMPTTGPSAQ.

It belongs to the UvrC family. In terms of assembly, interacts with UvrB in an incision complex.

The protein resides in the cytoplasm. In terms of biological role, the UvrABC repair system catalyzes the recognition and processing of DNA lesions. UvrC both incises the 5' and 3' sides of the lesion. The N-terminal half is responsible for the 3' incision and the C-terminal half is responsible for the 5' incision. This chain is UvrABC system protein C, found in Rhodococcus erythropolis (strain PR4 / NBRC 100887).